The sequence spans 374 residues: Chaperone protein DnaJ (374 aa).

The J domain occupies 5-70 (DYYEVLGVAR…NKRRMYDSHG (66 aa)). The segment at 130-207 (GVERRIEIPT…CHGNGRVEED (78 aa)) adopts a CR-type zinc-finger fold. Zn(2+) is bound by residues Cys-143, Cys-146, Cys-159, Cys-162, Cys-181, Cys-184, Cys-195, and Cys-198. CXXCXGXG motif repeat units lie at residues 143–150 (CGDCDGSG), 159–166 (CNVCHGRG), 181–188 (CHNCGGRG), and 195–202 (CKTCHGNG).

The protein belongs to the DnaJ family. Homodimer. Zn(2+) is required as a cofactor.

It localises to the cytoplasm. Participates actively in the response to hyperosmotic and heat shock by preventing the aggregation of stress-denatured proteins and by disaggregating proteins, also in an autonomous, DnaK-independent fashion. Unfolded proteins bind initially to DnaJ; upon interaction with the DnaJ-bound protein, DnaK hydrolyzes its bound ATP, resulting in the formation of a stable complex. GrpE releases ADP from DnaK; ATP binding to DnaK triggers the release of the substrate protein, thus completing the reaction cycle. Several rounds of ATP-dependent interactions between DnaJ, DnaK and GrpE are required for fully efficient folding. Also involved, together with DnaK and GrpE, in the DNA replication of plasmids through activation of initiation proteins. The polypeptide is Chaperone protein DnaJ (Stenotrophomonas maltophilia (strain K279a)).